The following is a 707-amino-acid chain: Polyribonucleotide nucleotidyltransferase (707 aa).

Mg(2+)-binding residues include aspartate 486 and aspartate 492. Residues 553 to 612 enclose the KH domain; that stretch reads PRIHIIKINPEKIKDVIGKGGSVIRMLTEETGTIIEIEDDGTVKISSTVKEKAKNAIRRI. In terms of domain architecture, S1 motif spans 622 to 690; sequence GRIYSGKVTR…RQGRLRLSIK (69 aa).

The protein belongs to the polyribonucleotide nucleotidyltransferase family. Component of the RNA degradosome, which is a multiprotein complex involved in RNA processing and mRNA degradation. Requires Mg(2+) as cofactor.

The protein resides in the cytoplasm. The catalysed reaction is RNA(n+1) + phosphate = RNA(n) + a ribonucleoside 5'-diphosphate. Functionally, involved in mRNA degradation. Catalyzes the phosphorolysis of single-stranded polyribonucleotides processively in the 3'- to 5'-direction. The sequence is that of Polyribonucleotide nucleotidyltransferase from Buchnera aphidicola subsp. Acyrthosiphon pisum (strain 5A).